The chain runs to 185 residues: Ribosome-recycling factor (185 aa).

This sequence belongs to the RRF family.

It localises to the cytoplasm. Responsible for the release of ribosomes from messenger RNA at the termination of protein biosynthesis. May increase the efficiency of translation by recycling ribosomes from one round of translation to another. The chain is Ribosome-recycling factor from Parafrankia sp. (strain EAN1pec).